The chain runs to 714 residues: Solute carrier family 12 member 8 (714 aa).

Transmembrane regions (helical) follow at residues 37 to 60, 72 to 93, 99 to 116, 123 to 142, 154 to 173, and 185 to 205; these read VLFG…VLFL, LLGM…LSGI, SSIG…VLGG, GLLY…TGFA, IWAV…GINL, and LLLF…FTHL. The N-linked (GlcNAc...) asparagine glycan is linked to Asn221. The next 5 helical transmembrane spans lie at 233-254, 266-289, 309-331, 360-377, and 383-403; these read FFTV…FNMG, LGSL…LGAI, GFLF…LYGA, PVAA…FVFV, and LAPI…YSYF. Disordered regions lie at residues 471 to 503 and 530 to 550; these read KLES…TLQD and GQES…PEGT. Residues 533–548 show a composition bias toward polar residues; sequence SCWNKQTSKSEGTQPE. 2 consecutive transmembrane segments (helical) span residues 593-616 and 622-643; these read CNPW…QWVY and GVAA…LGSA.

Belongs to the SLC12A transporter family. Ubiquitous with very low level in normal skin.

Its subcellular location is the membrane. Functionally, cation/chloride cotransporter that may play a role in the control of keratinocyte proliferation. This is Solute carrier family 12 member 8 (SLC12A8) from Homo sapiens (Human).